We begin with the raw amino-acid sequence, 411 residues long: E3 ubiquitin-protein ligase PUB23 (411 aa).

One can recognise a U-box domain in the interval 11–86 (EIPPFFLCPI…QSWCTLNASY (76 aa)). ARM repeat units follow at residues 132 to 173 (ATNK…HLET), 175 to 203 (ETVL…RGMY), 221 to 261 (DPMQ…NICP), and 263 to 306 (GRNR…LLCQ).

Interacts with RPN12A. Post-translationally, auto-ubiquitinated.

Its subcellular location is the cytoplasm. It catalyses the reaction S-ubiquitinyl-[E2 ubiquitin-conjugating enzyme]-L-cysteine + [acceptor protein]-L-lysine = [E2 ubiquitin-conjugating enzyme]-L-cysteine + N(6)-ubiquitinyl-[acceptor protein]-L-lysine.. It participates in protein modification; protein ubiquitination. Functionally, E3 ubiquitin-protein ligase that negatively regulates water stress response. May control in coordination with PUB23 a drought signaling pathway by ubiquitinating cytosolic RPN12a. Acts as a negative regulator of the immunity triggered by the pathogen-associated molecular patterns (PAMPs), in association with PUB22 and PUB24. The chain is E3 ubiquitin-protein ligase PUB23 (PUB23) from Arabidopsis thaliana (Mouse-ear cress).